We begin with the raw amino-acid sequence, 428 residues long: Glutamyl-tRNA reductase (428 aa).

Residues T49–R52, S109, E114–Q116, and Q120 each bind substrate. The active-site Nucleophile is C50. G189 to S194 is an NADP(+) binding site.

The protein belongs to the glutamyl-tRNA reductase family. In terms of assembly, homodimer.

The enzyme catalyses (S)-4-amino-5-oxopentanoate + tRNA(Glu) + NADP(+) = L-glutamyl-tRNA(Glu) + NADPH + H(+). Its pathway is porphyrin-containing compound metabolism; protoporphyrin-IX biosynthesis; 5-aminolevulinate from L-glutamyl-tRNA(Glu): step 1/2. The protein operates within porphyrin-containing compound metabolism; chlorophyll biosynthesis. In terms of biological role, catalyzes the NADPH-dependent reduction of glutamyl-tRNA(Glu) to glutamate 1-semialdehyde (GSA). This chain is Glutamyl-tRNA reductase, found in Microcystis aeruginosa (strain NIES-843 / IAM M-2473).